The sequence spans 152 residues: Xanthine-guanine phosphoribosyltransferase (152 aa).

5-phospho-alpha-D-ribose 1-diphosphate is bound by residues 37-38 (RG), Arg-69, and 88-96 (DDLVDTGGT). A GMP-binding site is contributed by Arg-69. Asp-89 provides a ligand contact to Mg(2+). Guanine-binding residues include Asp-92 and Ile-135. Xanthine is bound by residues Asp-92 and Ile-135. GMP-binding positions include 92–96 (DTGGT) and 134–135 (WI).

This sequence belongs to the purine/pyrimidine phosphoribosyltransferase family. XGPT subfamily. In terms of assembly, homotetramer. Requires Mg(2+) as cofactor.

The protein localises to the cell inner membrane. The enzyme catalyses GMP + diphosphate = guanine + 5-phospho-alpha-D-ribose 1-diphosphate. It carries out the reaction XMP + diphosphate = xanthine + 5-phospho-alpha-D-ribose 1-diphosphate. The catalysed reaction is IMP + diphosphate = hypoxanthine + 5-phospho-alpha-D-ribose 1-diphosphate. It functions in the pathway purine metabolism; GMP biosynthesis via salvage pathway; GMP from guanine: step 1/1. Its pathway is purine metabolism; XMP biosynthesis via salvage pathway; XMP from xanthine: step 1/1. Its function is as follows. Purine salvage pathway enzyme that catalyzes the transfer of the ribosyl-5-phosphate group from 5-phospho-alpha-D-ribose 1-diphosphate (PRPP) to the N9 position of the 6-oxopurines guanine and xanthine to form the corresponding ribonucleotides GMP (guanosine 5'-monophosphate) and XMP (xanthosine 5'-monophosphate), with the release of PPi. To a lesser extent, also acts on hypoxanthine. This Shigella boydii serotype 4 (strain Sb227) protein is Xanthine-guanine phosphoribosyltransferase.